The primary structure comprises 244 residues: Heat shock transcription factor (244 aa).

The DNA-binding element occupies 13–108 (IPKFIMKLYK…LLGFDDSLRM (96 aa)). The involved in trimerization stretch occupies residues 123 to 168 (DGSLKEIVEYLYVQNQELYTELSVCKERIERQERALNGLIEILSRV). The disordered stretch occupies residues 204-244 (EGCEPASPPLQDKGIPELSFKPGGIPHADSDTKDDNYDPFF). Basic and acidic residues predominate over residues 231-244 (ADSDTKDDNYDPFF).

It belongs to the HSF family. In terms of assembly, homotrimer. Homotrimerization increases the affinity of HSF1 to DNA.

Its subcellular location is the nucleus. Its function is as follows. DNA-binding transcription factor that specifically binds heat shock promoter elements (HSE) and activates transcription. The polypeptide is Heat shock transcription factor (Encephalitozoon cuniculi (strain GB-M1) (Microsporidian parasite)).